Consider the following 1938-residue polypeptide: Myosin-1 (1938 aa).

In terms of domain architecture, Myosin N-terminal SH3-like spans 33 to 82 (DAKTSVFVADPKESFVKATVQSREGGKVTAKTEAGATVTVKEDQVFPMNP). 2 positions are modified to phosphothreonine: T64 and T69. The Myosin motor domain occupies 86–781 (DKIEDMAMMT…LLGLLEEMRD (696 aa)). K130 is modified (N6,N6,N6-trimethyllysine). 179–186 (GESGAGKT) lines the ATP pocket. Phosphotyrosine is present on Y389. Position 419 is a phosphothreonine (T419). A Phosphotyrosine modification is found at Y424. S625 carries the phosphoserine modification. Residues 658 to 680 (LNKLMTNLRSTHPHFVRCIIPNE) form an actin-binding region. Residue H756 is modified to Pros-methylhistidine. An actin-binding region spans residues 760-774 (KFGHTKVFFKAGLLG). The region spanning 784-813 (LAQLITRTQARCRGFLARVEYQKMVERRES) is the IQ domain. Residues 842–1938 (LLKSAETEKE…EVHTKIISEE (1097 aa)) adopt a coiled-coil conformation. Phosphoserine occurs at positions 1091 and 1095. 2 disordered regions span residues 1124-1146 (EIEAERASRAKAEKQRSDLSREL) and 1152-1171 (RLEEAGGATSAQIEMNKKRE). Residues 1127-1146 (AERASRAKAEKQRSDLSREL) show a composition bias toward basic and acidic residues. Residues S1161 and S1236 each carry the phosphoserine modification. The residue at position 1240 (T1240) is a Phosphothreonine. A phosphoserine mark is found at S1242 and S1260. T1264 and T1285 each carry phosphothreonine. A phosphoserine mark is found at S1287, S1291, S1302, and S1305. Y1463 carries the phosphotyrosine modification. T1466 carries the phosphothreonine modification. Phosphoserine is present on S1473. At Y1491 the chain carries Phosphotyrosine. S1494 is modified (phosphoserine). Phosphothreonine is present on T1500. The residue at position 1513 (S1513) is a Phosphoserine. At T1516 the chain carries Phosphothreonine. Residues S1541, S1553, S1573, S1599, S1602, S1713, and S1725 each carry the phosphoserine modification. 2 positions are modified to phosphothreonine: T1729 and T1735.

The protein belongs to the TRAFAC class myosin-kinesin ATPase superfamily. Myosin family. Muscle myosin is a hexameric protein that consists of 2 heavy chain subunits (MHC), 2 alkali light chain subunits (MLC) and 2 regulatory light chain subunits (MLC-2). Interacts with SLC26A5.

The protein resides in the cytoplasm. It localises to the myofibril. Required for normal hearing. It plays a role in cochlear amplification of auditory stimuli, likely through the positive regulation of prestin (SLC26A5) activity and outer hair cell (OHC) electromotility. This chain is Myosin-1 (MYH1), found in Bos taurus (Bovine).